The chain runs to 301 residues: Recombination-associated protein RdgC (301 aa).

The protein belongs to the RdgC family.

It is found in the cytoplasm. Its subcellular location is the nucleoid. May be involved in recombination. This is Recombination-associated protein RdgC from Xanthomonas oryzae pv. oryzae (strain KACC10331 / KXO85).